Reading from the N-terminus, the 213-residue chain is High frequency lysogenization protein HflD homolog (213 aa).

A coiled-coil region spans residues 79–126 (QGLNAELTRYTLSLMVLERKLSSAKGALDTLGNRINGLQRQLEHFDLQ).

The protein belongs to the HflD family.

Its subcellular location is the cytoplasm. The protein localises to the cell inner membrane. The protein is High frequency lysogenization protein HflD homolog of Shigella boydii serotype 18 (strain CDC 3083-94 / BS512).